A 508-amino-acid polypeptide reads, in one-letter code: Aspartic proteinase A3 (508 aa).

A signal peptide spans 1–25 (MGTRFQSFLLVFLLSCLILISTASC). A propeptide spans 26–69 (ERNGDGTIRIGLKKRKLDRSNRLASQLFLKNRGSHWSPKHYFRL) (activation peptide). The Peptidase A1 domain occupies 87 to 505 (YYGDITIGTP…DYGKGRVGFA (419 aa)). The active site involves Asp105. 2 cysteine pairs are disulfide-bonded: Cys118-Cys124 and Cys283-Cys287. Asp292 is a catalytic residue. A Saposin B-type domain is found at 317-419 (IVSRECKAVV…AELCDHIPTQ (103 aa)). 4 disulfide bridges follow: Cys322–Cys413, Cys347–Cys385, Cys353–Cys382, and Cys427–Cys464. An N-linked (GlcNAc...) asparagine glycan is attached at Asn399.

It belongs to the peptidase A1 family. As to expression, expressed in petals, carpels and seed pods.

The protein resides in the secreted. In terms of biological role, involved in the processing and degradation of storage proteins. The polypeptide is Aspartic proteinase A3 (APA3) (Arabidopsis thaliana (Mouse-ear cress)).